Consider the following 290-residue polypeptide: Ribosomal RNA small subunit methyltransferase A (290 aa).

S-adenosyl-L-methionine-binding residues include Asn-27, Leu-29, Gly-54, Glu-75, Asp-100, and Asn-125.

The protein belongs to the class I-like SAM-binding methyltransferase superfamily. rRNA adenine N(6)-methyltransferase family. RsmA subfamily.

The protein localises to the cytoplasm. It carries out the reaction adenosine(1518)/adenosine(1519) in 16S rRNA + 4 S-adenosyl-L-methionine = N(6)-dimethyladenosine(1518)/N(6)-dimethyladenosine(1519) in 16S rRNA + 4 S-adenosyl-L-homocysteine + 4 H(+). In terms of biological role, specifically dimethylates two adjacent adenosines (A1518 and A1519) in the loop of a conserved hairpin near the 3'-end of 16S rRNA in the 30S particle. May play a critical role in biogenesis of 30S subunits. The chain is Ribosomal RNA small subunit methyltransferase A from Streptococcus pneumoniae (strain Hungary19A-6).